Consider the following 88-residue polypeptide: Acyl-CoA-binding domain-containing protein 7 (88 aa).

An ACB domain is found at 3–88; sequence LQADFDQAAQ…ARELIEKYGI (86 aa). Residues R15, 30 to 34, K56, and Y75 each bind an acyl-CoA; that span reads YGLYK.

Belongs to the ACBD7 family.

Its function is as follows. Binds medium- and long-chain acyl-CoA esters. The sequence is that of Acyl-CoA-binding domain-containing protein 7 (Acbd7) from Mus musculus (Mouse).